A 209-amino-acid chain; its full sequence is Glutathione S-transferase 1-1 (209 aa).

Residues Met1–Asp81 form the GST N-terminal domain. Glutathione contacts are provided by residues His51 to Ile53 and Glu65 to Arg67. The region spanning Cys87–Glu209 is the GST C-terminal domain.

This sequence belongs to the GST superfamily. Theta family. Homodimer.

It carries out the reaction RX + glutathione = an S-substituted glutathione + a halide anion + H(+). Conjugation of reduced glutathione to a wide number of exogenous and endogenous hydrophobic electrophiles. The polypeptide is Glutathione S-transferase 1-1 (GstD1) (Drosophila yakuba (Fruit fly)).